We begin with the raw amino-acid sequence, 214 residues long: ATP phosphoribosyltransferase (214 aa).

Belongs to the ATP phosphoribosyltransferase family. Short subfamily. Heteromultimer composed of HisG and HisZ subunits.

The protein localises to the cytoplasm. The enzyme catalyses 1-(5-phospho-beta-D-ribosyl)-ATP + diphosphate = 5-phospho-alpha-D-ribose 1-diphosphate + ATP. Its pathway is amino-acid biosynthesis; L-histidine biosynthesis; L-histidine from 5-phospho-alpha-D-ribose 1-diphosphate: step 1/9. In terms of biological role, catalyzes the condensation of ATP and 5-phosphoribose 1-diphosphate to form N'-(5'-phosphoribosyl)-ATP (PR-ATP). Has a crucial role in the pathway because the rate of histidine biosynthesis seems to be controlled primarily by regulation of HisG enzymatic activity. This Azoarcus sp. (strain BH72) protein is ATP phosphoribosyltransferase.